Here is a 230-residue protein sequence, read N- to C-terminus: Ribonuclease HII (230 aa).

One can recognise an RNase H type-2 domain in the interval 28 to 217; sequence FRIAGIDEAG…VKEHLPSQPD (190 aa). A divalent metal cation is bound by residues Asp-34, Glu-35, and Asp-126. The segment at 209–230 is disordered; that stretch reads KEHLPSQPDSDTAGPSTGLFSF. A compositionally biased stretch (polar residues) spans 215–230; sequence QPDSDTAGPSTGLFSF.

This sequence belongs to the RNase HII family. Mn(2+) serves as cofactor. The cofactor is Mg(2+).

It localises to the cytoplasm. The enzyme catalyses Endonucleolytic cleavage to 5'-phosphomonoester.. Its function is as follows. Endonuclease that specifically degrades the RNA of RNA-DNA hybrids. The protein is Ribonuclease HII of Citrifermentans bemidjiense (strain ATCC BAA-1014 / DSM 16622 / JCM 12645 / Bem) (Geobacter bemidjiensis).